A 530-amino-acid chain; its full sequence is Transcriptional regulator VasH (530 aa).

A Sigma-54 factor interaction domain is found at 193–422 (LIGESAAMQK…LKHLIEFGCA (230 aa)). Residues 221 to 228 (GETGTGKE) and 284 to 293 (ANGGTLFLDE) contribute to the ATP site.

Transcriptional regulator of the type VI secretion system. The protein is Transcriptional regulator VasH of Vibrio cholerae serotype O1 (strain ATCC 39315 / El Tor Inaba N16961).